The chain runs to 110 residues: Large ribosomal subunit protein uL22 (110 aa).

Belongs to the universal ribosomal protein uL22 family. As to quaternary structure, part of the 50S ribosomal subunit.

Its function is as follows. This protein binds specifically to 23S rRNA; its binding is stimulated by other ribosomal proteins, e.g. L4, L17, and L20. It is important during the early stages of 50S assembly. It makes multiple contacts with different domains of the 23S rRNA in the assembled 50S subunit and ribosome. In terms of biological role, the globular domain of the protein is located near the polypeptide exit tunnel on the outside of the subunit, while an extended beta-hairpin is found that lines the wall of the exit tunnel in the center of the 70S ribosome. The polypeptide is Large ribosomal subunit protein uL22 (Enterobacter sp. (strain 638)).